Reading from the N-terminus, the 487-residue chain is Serine/threonine-protein kinase 4 (487 aa).

Methionine 1 is subject to N-acetylmethionine. A Phosphothreonine modification is found at threonine 3. Residues 30-281 (FDVLEKLGEG…ATQLLQHPFV (252 aa)) enclose the Protein kinase domain. ATP-binding positions include 36-44 (LGEGSYGSV) and lysine 59. Aspartate 149 functions as the Proton acceptor in the catalytic mechanism. Threonine 183 is subject to Phosphothreonine; by autocatalysis. At serine 265 the chain carries Phosphoserine. Positions 290-310 (LRDLINEAMDVKLKRQEAQQR) form a coiled coil. The segment at 305–337 (QEAQQREVDQDDEENSEEDELDSGTMVRAVGDE) is disordered. The segment covering 313-326 (DQDDEENSEEDELD) has biased composition (acidic residues). At serine 320 the chain carries Phosphoserine. Phosphothreonine occurs at positions 340 and 367. Threonine 387 carries the post-translational modification Phosphothreonine; by PKB/AKT1. Phosphoserine is present on residues serine 410 and serine 414. Position 433 is a phosphotyrosine (tyrosine 433). The 48-residue stretch at 433–480 (YEFLKSWTVEDLQKRLLALDPMMEQEIEEIRQKYQSKRQPILDAIEAK) folds into the SARAH domain.

Belongs to the protein kinase superfamily. STE Ser/Thr protein kinase family. STE20 subfamily. In terms of assembly, homodimer; mediated via the coiled-coil region. Interacts with NORE1, which inhibits autoactivation. Interacts with and stabilizes SAV1. Interacts with RASSF1. Interacts with FOXO3. Interacts with RASSF2 (via SARAH domain). Interacts with AR, PKB/AKT1, TNNI3 and SIRT1. Interacts with DLG5 (via PDZ domain 3). Interacts with MARK3 and SCRIB in the presence of DLG5. Mg(2+) serves as cofactor. Post-translationally, autophosphorylated on serine and threonine residues. Phosphorylation at Thr-387 by PKB/AKT1, leads to inhibition of its: kinase activity, nuclear translocation and autophosphorylation at Thr-183. It also diminishes its cleavage by caspases and its ability to phosphorylate FOXO3. In terms of processing, proteolytically cleaved by caspase-3 during apoptosis at Asp-326 and Asp-349 resulting in a 37 kDa or a 39 kDa subunit respectively. The 39 kDa subunit is further cleaved into the 37 kDa form. Proteolytic cleavage results in kinase activation and nuclear translocation of the truncated form (MST1/N). It is less likely that cleavage at Asp-349 is a prerequisite for activation as this site is not conserved in the murine ortholog.

The protein localises to the cytoplasm. It localises to the nucleus. It catalyses the reaction L-seryl-[protein] + ATP = O-phospho-L-seryl-[protein] + ADP + H(+). The catalysed reaction is L-threonyl-[protein] + ATP = O-phospho-L-threonyl-[protein] + ADP + H(+). Its activity is regulated as follows. Inhibited by the C-terminal non-catalytic region. Activated by caspase-cleavage. Full activation also requires homodimerization and autophosphorylation of Thr-183. Activated by RASSF1 which acts by preventing its dephosphorylation. Its function is as follows. Stress-activated, pro-apoptotic kinase which, following caspase-cleavage, enters the nucleus and induces chromatin condensation followed by internucleosomal DNA fragmentation. Key component of the Hippo signaling pathway which plays a pivotal role in organ size control and tumor suppression by restricting proliferation and promoting apoptosis. The core of this pathway is composed of a kinase cascade wherein STK3/MST2 and STK4/MST1, in complex with its regulatory protein SAV1, phosphorylates and activates LATS1/2 in complex with its regulatory protein MOB1, which in turn phosphorylates and inactivates YAP1 oncoprotein and WWTR1/TAZ. Phosphorylation of YAP1 by LATS2 inhibits its translocation into the nucleus to regulate cellular genes important for cell proliferation, cell death, and cell migration. STK3/MST2 and STK4/MST1 are required to repress proliferation of mature hepatocytes, to prevent activation of facultative adult liver stem cells (oval cells), and to inhibit tumor formation. Phosphorylates 'Ser-14' of histone H2B (H2BS14ph) during apoptosis. Phosphorylates FOXO3 upon oxidative stress, which results in its nuclear translocation and cell death initiation. Phosphorylates MOBKL1A, MOBKL1B and RASSF2. Phosphorylates TNNI3 (cardiac Tn-I) and alters its binding affinity to TNNC1 (cardiac Tn-C) and TNNT2 (cardiac Tn-T). Phosphorylates FOXO1 on 'Ser-212' and regulates its activation and stimulates transcription of PMAIP1 in a FOXO1-dependent manner. Phosphorylates SIRT1 and inhibits SIRT1-mediated p53/TP53 deacetylation, thereby promoting p53/TP53 dependent transcription and apoptosis upon DNA damage. Acts as an inhibitor of PKB/AKT1. Phosphorylates AR on 'Ser-650' and suppresses its activity by intersecting with PKB/AKT1 signaling and antagonizing formation of AR-chromatin complexes. The chain is Serine/threonine-protein kinase 4 (STK4) from Otolemur garnettii (Small-eared galago).